We begin with the raw amino-acid sequence, 267 residues long: Diphthine--ammonia ligase (267 aa).

Tyr97 is subject to Phosphotyrosine.

The protein belongs to the Diphthine--ammonia ligase family.

The catalysed reaction is diphthine-[translation elongation factor 2] + NH4(+) + ATP = diphthamide-[translation elongation factor 2] + AMP + diphosphate + H(+). It functions in the pathway protein modification; peptidyl-diphthamide biosynthesis. In terms of biological role, amidase that catalyzes the last step of diphthamide biosynthesis using ammonium and ATP. Diphthamide biosynthesis consists in the conversion of an L-histidine residue in the translation elongation factor 2 (EEF2) to diphthamide. The sequence is that of Diphthine--ammonia ligase (Dph6) from Mus musculus (Mouse).